The sequence spans 449 residues: Allantoinase (449 aa).

Residues His-59, His-61, Lys-146, His-182, His-238, and Asp-311 each coordinate Zn(2+). N6-carboxylysine is present on Lys-146.

This sequence belongs to the metallo-dependent hydrolases superfamily. Allantoinase family. As to quaternary structure, homotetramer. Requires Zn(2+) as cofactor. In terms of processing, carboxylation allows a single lysine to coordinate two zinc ions.

It carries out the reaction (S)-allantoin + H2O = allantoate + H(+). Its pathway is nitrogen metabolism; (S)-allantoin degradation; allantoate from (S)-allantoin: step 1/1. In terms of biological role, catalyzes the conversion of allantoin (5-ureidohydantoin) to allantoic acid by hydrolytic cleavage of the five-member hydantoin ring. This chain is Allantoinase, found in Deinococcus geothermalis (strain DSM 11300 / CIP 105573 / AG-3a).